A 262-amino-acid polypeptide reads, in one-letter code: Ubiquinone biosynthesis protein COQ4, mitochondrial (262 aa).

Zn(2+)-binding residues include H154, D155, H158, and E170. Residues 243–262 (LGIEQPPDLRQMKKDMAKKK) are disordered. A compositionally biased stretch (basic and acidic residues) spans 252-262 (RQMKKDMAKKK).

It belongs to the COQ4 family. In terms of assembly, component of a multi-subunit COQ enzyme complex, composed of at least COQ3, COQ4, COQ5, COQ6, COQ7 and COQ9. It depends on Zn(2+) as a cofactor.

The protein localises to the mitochondrion inner membrane. The enzyme catalyses a 4-hydroxy-3-methoxy-5-(all-trans-polyprenyl)benzoate + H(+) = a 2-methoxy-6-(all-trans-polyprenyl)phenol + CO2. It participates in cofactor biosynthesis; ubiquinone biosynthesis. Functionally, lyase that catalyzes the C1-decarboxylation of 4-hydroxy-3-methoxy-5-(all-trans-polyprenyl)benzoic acid into 2-methoxy-6-(all-trans-polyprenyl)phenol during ubiquinone biosynthesis. This is Ubiquinone biosynthesis protein COQ4, mitochondrial from Yarrowia lipolytica (strain CLIB 122 / E 150) (Yeast).